A 98-amino-acid chain; its full sequence is Class II hydrophobin 2 (98 aa).

Positions 1–21 are cleaved as a signal peptide; the sequence is MFFSRISTIVSMTALFASALA. Intrachain disulfides connect Cys34–Cys80, Cys41–Cys71, Cys42–Cys54, and Cys81–Cys92.

Belongs to the cerato-ulmin hydrophobin family.

It localises to the secreted. The protein localises to the cell wall. Functionally, aerial growth, conidiation, and dispersal of filamentous fungi in the environment rely upon a capability of their secreting small amphipathic proteins called hydrophobins (HPBs) with low sequence identity. Class I can self-assemble into an outermost layer of rodlet bundles on aerial cell surfaces, conferring cellular hydrophobicity that supports fungal growth, development and dispersal; whereas Class II form highly ordered films at water-air interfaces through intermolecular interactions but contribute nothing to the rodlet structure. In Botryotinia fuckeliana, hydrophobins are not involved in conferring surface hydrophobicity to conidia and aerial hyphae and their function in sclerotia and fruiting bodies remains to be investigated. The chain is Class II hydrophobin 2 from Botryotinia fuckeliana (strain B05.10) (Noble rot fungus).